Consider the following 128-residue polypeptide: Small ribosomal subunit protein uS11 (128 aa).

It belongs to the universal ribosomal protein uS11 family. In terms of assembly, part of the 30S ribosomal subunit. Interacts with proteins S7 and S18. Binds to IF-3.

In terms of biological role, located on the platform of the 30S subunit, it bridges several disparate RNA helices of the 16S rRNA. Forms part of the Shine-Dalgarno cleft in the 70S ribosome. The polypeptide is Small ribosomal subunit protein uS11 (Desulforudis audaxviator (strain MP104C)).